The chain runs to 277 residues: Phosphonates import ATP-binding protein PhnC 2 (277 aa).

Residues 5 to 253 (IHVQGLNKTF…FLNDLYGADA (249 aa)) form the ABC transporter domain. Residue 37–44 (GASGSGKS) coordinates ATP.

This sequence belongs to the ABC transporter superfamily. Phosphonates importer (TC 3.A.1.9.1) family. The complex is composed of two ATP-binding proteins (PhnC), two transmembrane proteins (PhnE) and a solute-binding protein (PhnD).

It is found in the cell inner membrane. It catalyses the reaction phosphonate(out) + ATP + H2O = phosphonate(in) + ADP + phosphate + H(+). Part of the ABC transporter complex PhnCDE involved in phosphonates import. Responsible for energy coupling to the transport system. This is Phosphonates import ATP-binding protein PhnC 2 from Pseudomonas syringae pv. syringae (strain B728a).